The following is a 513-amino-acid chain: GMP synthase [glutamine-hydrolyzing] (513 aa).

The region spanning 3-192 (TVVVLDYGSQ…VSKIAKMEKN (190 aa)) is the Glutamine amidotransferase type-1 domain. Cysteine 80 functions as the Nucleophile in the catalytic mechanism. Residues histidine 166 and glutamate 168 contribute to the active site. Residues 193 to 388 (WEMKDFVSEK…LELPQSMINR (196 aa)) enclose the GMPS ATP-PPase domain. ATP is bound at residue 220 to 226 (SGGVDSS).

Homodimer.

The enzyme catalyses XMP + L-glutamine + ATP + H2O = GMP + L-glutamate + AMP + diphosphate + 2 H(+). Its pathway is purine metabolism; GMP biosynthesis; GMP from XMP (L-Gln route): step 1/1. Functionally, catalyzes the synthesis of GMP from XMP. The polypeptide is GMP synthase [glutamine-hydrolyzing] (Thermosipho melanesiensis (strain DSM 12029 / CIP 104789 / BI429)).